A 179-amino-acid polypeptide reads, in one-letter code: Alkyl hydroperoxide reductase AhpD (179 aa).

Cys-130 acts as the Proton donor in catalysis. The cysteines at positions 130 and 133 are disulfide-linked. Cys-133 acts as the Cysteine sulfenic acid (-SOH) intermediate in catalysis.

It belongs to the AhpD family. Homotrimer.

It catalyses the reaction N(6)-[(R)-dihydrolipoyl]-L-lysyl-[lipoyl-carrier protein] + a hydroperoxide = N(6)-[(R)-lipoyl]-L-lysyl-[lipoyl-carrier protein] + an alcohol + H2O. Its function is as follows. Antioxidant protein with alkyl hydroperoxidase activity. Required for the reduction of the AhpC active site cysteine residues and for the regeneration of the AhpC enzyme activity. The protein is Alkyl hydroperoxide reductase AhpD of Rhodococcus erythropolis (strain PR4 / NBRC 100887).